Consider the following 102-residue polypeptide: Large ribosomal subunit protein bL21 (102 aa).

This sequence belongs to the bacterial ribosomal protein bL21 family. As to quaternary structure, part of the 50S ribosomal subunit. Contacts protein L20.

Its function is as follows. This protein binds to 23S rRNA in the presence of protein L20. The chain is Large ribosomal subunit protein bL21 from Solidesulfovibrio magneticus (strain ATCC 700980 / DSM 13731 / RS-1) (Desulfovibrio magneticus).